The following is a 147-amino-acid chain: Cyanate hydratase (147 aa).

Catalysis depends on residues Arg88, Glu91, and Ser114.

The protein belongs to the cyanase family.

It carries out the reaction cyanate + hydrogencarbonate + 3 H(+) = NH4(+) + 2 CO2. In terms of biological role, catalyzes the reaction of cyanate with bicarbonate to produce ammonia and carbon dioxide. This Methylibium petroleiphilum (strain ATCC BAA-1232 / LMG 22953 / PM1) protein is Cyanate hydratase.